Consider the following 188-residue polypeptide: Elongation factor P (188 aa).

Position 34 is an N6-(3,6-diaminohexanoyl)-5-hydroxylysine (K34).

It belongs to the elongation factor P family. Post-translationally, may be beta-lysylated on the epsilon-amino group of Lys-34 by the combined action of EpmA and EpmB, and then hydroxylated on the C5 position of the same residue by EpmC (if this protein is present). Lysylation is critical for the stimulatory effect of EF-P on peptide-bond formation. The lysylation moiety may extend toward the peptidyltransferase center and stabilize the terminal 3-CCA end of the tRNA. Hydroxylation of the C5 position on Lys-34 may allow additional potential stabilizing hydrogen-bond interactions with the P-tRNA.

The protein localises to the cytoplasm. The protein operates within protein biosynthesis; polypeptide chain elongation. Functionally, involved in peptide bond synthesis. Alleviates ribosome stalling that occurs when 3 or more consecutive Pro residues or the sequence PPG is present in a protein, possibly by augmenting the peptidyl transferase activity of the ribosome. Modification of Lys-34 is required for alleviation. This Methylococcus capsulatus (strain ATCC 33009 / NCIMB 11132 / Bath) protein is Elongation factor P.